We begin with the raw amino-acid sequence, 139 residues long: Small ribosomal subunit protein bS6 (139 aa).

This sequence belongs to the bacterial ribosomal protein bS6 family.

Binds together with bS18 to 16S ribosomal RNA. The polypeptide is Small ribosomal subunit protein bS6 (Borreliella afzelii (strain PKo) (Borrelia afzelii)).